Consider the following 93-residue polypeptide: RNA-binding protein Hfq (93 aa).

Residues 9–68 (DPFLNALRRERVPVSIYLVNGIKLQGQVESFDQFVILLKNTVSQMVYKHAISTVVPARPF) form the Sm domain. The disordered stretch occupies residues 70–93 (VNSHTAAPSPAGGFNGQQDDNNDQ).

The protein belongs to the Hfq family. Homohexamer.

Functionally, RNA chaperone that binds small regulatory RNA (sRNAs) and mRNAs to facilitate mRNA translational regulation in response to envelope stress, environmental stress and changes in metabolite concentrations. Also binds with high specificity to tRNAs. This is RNA-binding protein Hfq from Shewanella sediminis (strain HAW-EB3).